A 458-amino-acid polypeptide reads, in one-letter code: MEASGTDEVDKLKTKFISAWNNMKYSWVLKTKTYFSRNSPVLLLGKCYHFKYEDESKMLPARSGCAIEDHVIAGNVEEFRKDFISRIWLTYREEFPQIEASALTTDCGWGCTLRTGQMLLAQGLILHFLGRAWTWPDALHIENADSDSWTSNTVKKFTASFEASLSGDRELRTPAVSLKETSGKCPDDHAVRNEAYHRKIISWFGDSPVAVFGLHRLIEFGKKSGKKAGDWYGPAVVAHILRKAVEEARHPDLQGLTIYVAQDCTVYNSDVIDKQTDSVTAGDARDKAVIILVPVRLGGERTNTDYLEFVKGVLSLEYCVGIIGGKPKQSYYFAGFQDDSLIYMDPHYCQSFVDVSIKDFPLETFHCPSPKKMSFRKMDPSCTIGFYCRNVQDFERASEEITKMLKISSKEKYPLFTFVNGHSKDFDFTSTAASEEDLFSEDERKNFKRFSTEEFVLL.

Residue Met-1 is modified to N-acetylmethionine. Cys-111 acts as the Nucleophile in catalysis. Catalysis depends on residues Asp-345 and His-347. At Ser-451 the chain carries Phosphoserine. Residue Thr-452 is modified to Phosphothreonine.

This sequence belongs to the peptidase C54 family.

The protein localises to the cytoplasm. It carries out the reaction [protein]-C-terminal L-amino acid-glycyl-phosphatidylethanolamide + H2O = [protein]-C-terminal L-amino acid-glycine + a 1,2-diacyl-sn-glycero-3-phosphoethanolamine. Inhibited by N-ethylmaleimide. In terms of biological role, cysteine protease that plays a key role in autophagy by mediating both proteolytic activation and delipidation of ATG8 family proteins. The protease activity is required for proteolytic activation of ATG8 family proteins: cleaves the C-terminal amino acid of ATG8 proteins MAP1LC3 and GABARAPL2, to reveal a C-terminal glycine. Exposure of the glycine at the C-terminus is essential for ATG8 proteins conjugation to phosphatidylethanolamine (PE) and insertion to membranes, which is necessary for autophagy. In addition to the protease activity, also mediates delipidation of ATG8 family proteins. Catalyzes delipidation of PE-conjugated forms of ATG8 proteins during macroautophagy. Compared to ATG4B, the major protein for proteolytic activation of ATG8 proteins, shows weaker ability to cleave the C-terminal amino acid of ATG8 proteins, while it displays stronger delipidation activity. In contrast to other members of the family, weakly or not involved in phagophore growth during mitophagy. The sequence is that of Cysteine protease ATG4C from Mus musculus (Mouse).